The chain runs to 315 residues: Acetyl-coenzyme A carboxylase carboxyl transferase subunit alpha (315 aa).

The 254-residue stretch at 36 to 289 (LGKKRLELME…RKAVAAELKV (254 aa)) folds into the CoA carboxyltransferase C-terminal domain.

It belongs to the AccA family. As to quaternary structure, acetyl-CoA carboxylase is a heterohexamer composed of biotin carboxyl carrier protein (AccB), biotin carboxylase (AccC) and two subunits each of ACCase subunit alpha (AccA) and ACCase subunit beta (AccD).

The protein resides in the cytoplasm. It catalyses the reaction N(6)-carboxybiotinyl-L-lysyl-[protein] + acetyl-CoA = N(6)-biotinyl-L-lysyl-[protein] + malonyl-CoA. Its pathway is lipid metabolism; malonyl-CoA biosynthesis; malonyl-CoA from acetyl-CoA: step 1/1. In terms of biological role, component of the acetyl coenzyme A carboxylase (ACC) complex. First, biotin carboxylase catalyzes the carboxylation of biotin on its carrier protein (BCCP) and then the CO(2) group is transferred by the carboxyltransferase to acetyl-CoA to form malonyl-CoA. The chain is Acetyl-coenzyme A carboxylase carboxyl transferase subunit alpha from Francisella philomiragia subsp. philomiragia (strain ATCC 25017 / CCUG 19701 / FSC 153 / O#319-036).